The chain runs to 184 residues: ATP synthase subunit b, chloroplastic (184 aa).

Residues 31–53 (LINLSVVLGVLIYFGKGVLSNLL) form a helical membrane-spanning segment.

The protein belongs to the ATPase B chain family. In terms of assembly, F-type ATPases have 2 components, F(1) - the catalytic core - and F(0) - the membrane proton channel. F(1) has five subunits: alpha(3), beta(3), gamma(1), delta(1), epsilon(1). F(0) has four main subunits: a(1), b(1), b'(1) and c(10-14). The alpha and beta chains form an alternating ring which encloses part of the gamma chain. F(1) is attached to F(0) by a central stalk formed by the gamma and epsilon chains, while a peripheral stalk is formed by the delta, b and b' chains.

The protein localises to the plastid. It is found in the chloroplast thylakoid membrane. Functionally, f(1)F(0) ATP synthase produces ATP from ADP in the presence of a proton or sodium gradient. F-type ATPases consist of two structural domains, F(1) containing the extramembraneous catalytic core and F(0) containing the membrane proton channel, linked together by a central stalk and a peripheral stalk. During catalysis, ATP synthesis in the catalytic domain of F(1) is coupled via a rotary mechanism of the central stalk subunits to proton translocation. Component of the F(0) channel, it forms part of the peripheral stalk, linking F(1) to F(0). The sequence is that of ATP synthase subunit b, chloroplastic from Cycas taitungensis (Prince sago).